The sequence spans 559 residues: MSTSRTTTNNKRHTKHVFVTGGVVSSLGKGLTAASLGQLLIARGLNVTMQKLDPYLNVDPGTMNPFEHGEVFVTEDGAETDLDLGHYERFLNRNLTANANVTTGKVYSTVIARERRGGYLGRTVQVIPHITDEIKARILAMGDPDEHGVVPDVVISEVGGTVGDIESQPFLEAARQVRQEIGRENCFFIHCSLVPYLATSGELKTKPTQHSVAELRSIGILPDALVLRCDREVPEALKTKIALMCDVDTDGVVSCPDSESIYTIPETLYHEHLDTFLIRRLDLPFRDVDWTGWRDLLDRVHHPEREITVGIVGKYVDLPDAYLSVVEAIRAAGYAHRTRTRITWITSDDCTTPAGAATALGGVDALVIPGGFGARGIEGKIAAVTYAREHRIPLLGLCLGLQCVVIEAARQAGLEQATSTEFDPGAAQPVISTMAEQQAAVSGQADLGGTMRLGSYPATLEQGSLVAQLYGITEVSERHRHRYEVNNAYRTQIGQRSPLIFSGTSPDGHLVEFVEYDRAVHPFLVATQAHPEYKSRPTQAHPLFSGLVAAALAAAVTDA.

An amidoligase domain region spans residues 1–283; the sequence is MSTSRTTTNN…DTFLIRRLDL (283 aa). A CTP-binding site is contributed by serine 25. Serine 25 contacts UTP. ATP-binding positions include 26–31 and aspartate 83; that span reads SLGKGL. Residues aspartate 83 and glutamate 157 each contribute to the Mg(2+) site. CTP is bound by residues 164–166, 204–209, and lysine 240; these read DIE and KTKPTQ. Residues 204–209 and lysine 240 contribute to the UTP site; that span reads KTKPTQ. Residues 308 to 557 form the Glutamine amidotransferase type-1 domain; the sequence is TVGIVGKYVD…VAAALAAAVT (250 aa). Residue glycine 371 coordinates L-glutamine. Cysteine 398 acts as the Nucleophile; for glutamine hydrolysis in catalysis. L-glutamine-binding positions include 399–402, glutamate 421, and arginine 482; that span reads LGLQ. Active-site residues include histidine 530 and glutamate 532.

It belongs to the CTP synthase family. As to quaternary structure, homotetramer.

It carries out the reaction UTP + L-glutamine + ATP + H2O = CTP + L-glutamate + ADP + phosphate + 2 H(+). It catalyses the reaction L-glutamine + H2O = L-glutamate + NH4(+). The enzyme catalyses UTP + NH4(+) + ATP = CTP + ADP + phosphate + 2 H(+). It participates in pyrimidine metabolism; CTP biosynthesis via de novo pathway; CTP from UDP: step 2/2. Its activity is regulated as follows. Allosterically activated by GTP, when glutamine is the substrate; GTP has no effect on the reaction when ammonia is the substrate. The allosteric effector GTP functions by stabilizing the protein conformation that binds the tetrahedral intermediate(s) formed during glutamine hydrolysis. Inhibited by the product CTP, via allosteric rather than competitive inhibition. Functionally, catalyzes the ATP-dependent amination of UTP to CTP with either L-glutamine or ammonia as the source of nitrogen. Regulates intracellular CTP levels through interactions with the four ribonucleotide triphosphates. The sequence is that of CTP synthase from Corynebacterium efficiens (strain DSM 44549 / YS-314 / AJ 12310 / JCM 11189 / NBRC 100395).